Reading from the N-terminus, the 274-residue chain is Large ribosomal subunit protein uL2 (274 aa).

Disordered stretches follow at residues 28–53 (KPYA…TTRH) and 221–274 (RGTA…RTKK). Residues 39–48 (KSGGRNNNGR) are compositionally biased toward low complexity. Positions 253–274 (KGKKTRKNKRTEHFIVHRRTKK) are enriched in basic residues.

This sequence belongs to the universal ribosomal protein uL2 family. In terms of assembly, part of the 50S ribosomal subunit. Forms a bridge to the 30S subunit in the 70S ribosome.

One of the primary rRNA binding proteins. Required for association of the 30S and 50S subunits to form the 70S ribosome, for tRNA binding and peptide bond formation. It has been suggested to have peptidyltransferase activity; this is somewhat controversial. Makes several contacts with the 16S rRNA in the 70S ribosome. The polypeptide is Large ribosomal subunit protein uL2 (Proteus mirabilis (strain HI4320)).